The following is a 1183-amino-acid chain: MEQSNKQHRKAKEKNTAKKKLHTQGHNAKAFAVAAPGKMARTMQRSSDVNERKLHVPMVDRTPEDDPPPFIVAVVGPPGTGKTTLIRSLVRRMTKSTLNDIQGPITVVSGKHRRLTFLECPADDLNAMIDIAKIADLVLLLIDGNFGFEMETMEFLNIAQHHGMPRVLGVATHLDLFKSQSTLRASKKRLKHRFWTEVYQGAKLFYLSGVINGRYPDREILNLSRFISVMKFRPLKWRNEHPYMLADRFTDLTHPELIETQGLQIDRKVAIYGYLHGTPLPSAPGTRVHIAGVGDFSVAQIEKLPDPCPTPFYQQKLDDFEREKMKEEAKANGEITTASTTRRRKRLDDKDKLIYAPMSDVGGVLMDKDAVYIDIGKKNEEPSFVPGQERGEGEKLMTGLQSVEQSIAEKFDGVGLQLFSNGTELHEVADHEGMDVESGEESIEDDEGKSKGRTSLRKPRIYGKPVQEEDADIDNLPSDEEPYTNDDDVQDSEPRMVEIDFNNTGEQGAEKLALETDSEFEESEDEFSWERTAANKLKKTESKKRTWNIGKLIYMDNISPEECIRRWRGEDDDSKDESDIEEDVDDDFFRKKDGTVTKEGNKDHAVDLEKFVPYFDTFEKLAKKWKSVDAIKERFLGAGILGNDNKTKSDSNEGGEELYGDFEDLEDGNPSEQAEDNSDKESEDEDENEDTNGDDDNSFTNFDAEEKKDLTMEQEREMNAAKKEKLRAQFEIEEGENFKEDDENNEYDTWYELQKAKISKQLEINNIEYQEMTPEQRQRIEGFKAGSYVRIVFEKVPMEFVKNFNPKFPIVMGGLLPTEIKFGIVKARLRRHRWHKKILKTNDPLVLSLGWRRFQTLPIYTTTDSRTRTRMLKYTPEHTYCNAAFYGPLCSPNTPFCGVQIVANSDTGNGFRIAATGIVEEIDVNIEIVKKLKLVGFPYKIFKNTAFIKDMFSSAMEVARFEGAQIKTVSGIRGEIKRALSKPEGHYRAAFEDKILMSDIVILRSWYPVRVKKFYNPVTSLLLKEKTEWKGLRLTGQIRAAMNLETPSNPDSAYHKIERVERHFNGLKVPKAVQKELPFKSQIHQMKPQKKKTYMAKRAVVLGGDEKKARSFIQKVLTISKAKDSKRKEQKASQRKERLKKLAKMEEEKSQRDKEKKKEYFAQNGKRTTMGGDDESRPRKMRR.

The segment covering 1 to 23 (MEQSNKQHRKAKEKNTAKKKLHT) has biased composition (basic residues). A disordered region spans residues 1-39 (MEQSNKQHRKAKEKNTAKKKLHTQGHNAKAFAVAAPGKM). A Bms1-type G domain is found at 68–233 (PPFIVAVVGP…SRFISVMKFR (166 aa)). A G1 region spans residues 76 to 83 (GPPGTGKT). 76 to 83 (GPPGTGKT) provides a ligand contact to ATP. Residues 104-108 (PITVV) are G2. Residues 119–122 (ECPA) are G3. Residues 172 to 175 (THLD) form a G4 region. Residues 207–216 (LSGVINGRYP) are G5. The disordered stretch occupies residues 427-494 (EVADHEGMDV…NDDDVQDSEP (68 aa)). Over residues 435-447 (DVESGEESIEDDE) the composition is skewed to acidic residues. Ser-438 is modified (phosphoserine). Over residues 451 to 461 (KGRTSLRKPRI) the composition is skewed to basic residues. Positions 468 to 491 (EEDADIDNLPSDEEPYTNDDDVQD) are enriched in acidic residues. Ser-478 and Ser-492 each carry phosphoserine. Thr-504 and Thr-516 each carry phosphothreonine. Phosphoserine is present on residues Ser-518 and Ser-523. Residues 536 to 559 (KLKKTESKKRTWNIGKLIYMDNIS) are RCL1-binding. Ser-574 and Ser-578 each carry phosphoserine. Disordered stretches follow at residues 639 to 709 (GILG…EKKD) and 1123 to 1183 (KDSK…KMRR). A compositionally biased stretch (acidic residues) spans 653–697 (EGGEELYGDFEDLEDGNPSEQAEDNSDKESEDEDENEDTNGDDDN). 3 stretches are compositionally biased toward basic and acidic residues: residues 1123–1136 (KDSKRKEQKASQRK), 1143–1160 (AKMEEEKSQRDKEKKKEY), and 1174–1183 (DESRPRKMRR).

The protein belongs to the TRAFAC class translation factor GTPase superfamily. Bms1-like GTPase family. BMS1 subfamily. In terms of assembly, interacts directly with RCL1 and the U3 snoRNA to form a stable subcomplex. Component of the 90S small subunit processome also known as 90S pre-ribosome that consists of the 35S pre-rRNA, early-associating ribosomal proteins most of which are part of the small ribosomal subunit, the U3 snoRNA and associated proteins.

It localises to the cytoplasm. The protein resides in the nucleus. It is found in the nucleolus. The enzyme catalyses GTP + H2O = GDP + phosphate + H(+). Its activity is regulated as follows. Interactions with RCL1 stimulates its GTPase and U3 snoRNA binding activities. RCL1 activates BMS1 by promoting GDP/GTP exchange. In terms of biological role, GTPase required for synthesis of 40S ribosomal subunits and for processing the 35S pre-rRNA at sites A0, A1, and A2. Controls access of pre-ribosomal RNA intermediates to RCL1 during ribosome biogenesis by binding of RCL1 in a GTP-dependent manner and, via its affinity to U3 snoRNA, delivering it to pre-ribosomes. GTP-binding and/or GTP hydrolysis may induce conformational rearrangements within the BMS1-RCL1 complex allowing the interaction of RCL1 with its RNA substrate. Required for RCL1 import into the nucleus. The protein is Ribosome biogenesis protein BMS1 (BMS1) of Saccharomyces cerevisiae (strain ATCC 204508 / S288c) (Baker's yeast).